The chain runs to 353 residues: Endophilin-A3 (353 aa).

The membrane-binding amphipathic helix stretch occupies residues 1–21; the sequence is MSVAGLKKQFHKASQLFSEKI. A BAR domain is found at 18-249; the sequence is SEKISGAEGT…LQNRINVASS (232 aa). The required for dimerization upon membrane association stretch occupies residues 60-87; the sequence is PNPAYRAKLGMLNTMSKIRGQVKTTGYP. Residues 180–201 adopt a coiled-coil conformation; sequence DEEVKQAVEKFEESKELAERSM. The tract at residues 218 to 254 is interaction with ARC; sequence FVEAALDYHKQSTEILEDLQSKLQNRINVASSRPKRE. The 60-residue stretch at 291–350 folds into the SH3 domain; sequence VDQPCCQALYDFEPENEGELGFKEGDIITLTNQIDENWYEGMLNGESGFFPHNYVEVMVP.

Belongs to the endophilin family. Interacts with ARC. Interacts with SYNJ1 and DNM1. In terms of tissue distribution, highest level in a region associated with endocytosis of yolk proteins in developing oocytes (at protein level). Highest level in small ovarian follicles. High levels in brain and testis. Lower level in adrenal glands.

The protein localises to the cytoplasm. Its subcellular location is the early endosome membrane. Functionally, implicated in endocytosis. May recruit other proteins to membranes with high curvature. Implicated in endocytosis of yolk proteins during oogenesis. The protein is Endophilin-A3 of Gallus gallus (Chicken).